The primary structure comprises 395 residues: Succinyl-diaminopimelate desuccinylase (395 aa).

His-74 provides a ligand contact to Zn(2+). Residue Asp-76 is part of the active site. Asp-107 contributes to the Zn(2+) binding site. The active-site Proton acceptor is the Glu-141. 3 residues coordinate Zn(2+): Glu-142, Glu-170, and His-368.

The protein belongs to the peptidase M20A family. DapE subfamily. Homodimer. It depends on Zn(2+) as a cofactor. Co(2+) serves as cofactor.

The enzyme catalyses N-succinyl-(2S,6S)-2,6-diaminopimelate + H2O = (2S,6S)-2,6-diaminopimelate + succinate. It functions in the pathway amino-acid biosynthesis; L-lysine biosynthesis via DAP pathway; LL-2,6-diaminopimelate from (S)-tetrahydrodipicolinate (succinylase route): step 3/3. In terms of biological role, catalyzes the hydrolysis of N-succinyl-L,L-diaminopimelic acid (SDAP), forming succinate and LL-2,6-diaminopimelate (DAP), an intermediate involved in the bacterial biosynthesis of lysine and meso-diaminopimelic acid, an essential component of bacterial cell walls. The sequence is that of Succinyl-diaminopimelate desuccinylase from Brucella anthropi (strain ATCC 49188 / DSM 6882 / CCUG 24695 / JCM 21032 / LMG 3331 / NBRC 15819 / NCTC 12168 / Alc 37) (Ochrobactrum anthropi).